Here is a 326-residue protein sequence, read N- to C-terminus: Glycerol-3-phosphate dehydrogenase [NAD(P)+] (326 aa).

Tryptophan 15, arginine 35, and lysine 107 together coordinate NADPH. Sn-glycerol 3-phosphate contacts are provided by lysine 107, glycine 135, and serine 137. Alanine 139 serves as a coordination point for NADPH. Residues lysine 190, aspartate 243, serine 253, arginine 254, and asparagine 255 each coordinate sn-glycerol 3-phosphate. Lysine 190 functions as the Proton acceptor in the catalytic mechanism. Residue arginine 254 coordinates NADPH. Positions 273 and 275 each coordinate NADPH.

This sequence belongs to the NAD-dependent glycerol-3-phosphate dehydrogenase family.

It localises to the cytoplasm. The enzyme catalyses sn-glycerol 3-phosphate + NAD(+) = dihydroxyacetone phosphate + NADH + H(+). It carries out the reaction sn-glycerol 3-phosphate + NADP(+) = dihydroxyacetone phosphate + NADPH + H(+). It functions in the pathway membrane lipid metabolism; glycerophospholipid metabolism. Functionally, catalyzes the reduction of the glycolytic intermediate dihydroxyacetone phosphate (DHAP) to sn-glycerol 3-phosphate (G3P), the key precursor for phospholipid synthesis. The protein is Glycerol-3-phosphate dehydrogenase [NAD(P)+] of Bradyrhizobium diazoefficiens (strain JCM 10833 / BCRC 13528 / IAM 13628 / NBRC 14792 / USDA 110).